Reading from the N-terminus, the 205-residue chain is Isochorismatase domain-containing protein 2 (205 aa).

This sequence belongs to the isochorismatase family.

This Xenopus laevis (African clawed frog) protein is Isochorismatase domain-containing protein 2 (isoc2).